Reading from the N-terminus, the 737-residue chain is Relaxin receptor 2 (737 aa).

Residues 1 to 399 (MWLLLHVILL…SSSEDLLANG (399 aa)) lie on the Extracellular side of the membrane. The LDL-receptor class A domain maps to 27–64 (LCPKGYFPCGNLTKCLPRAFHCDGVDDCGNGADEDNCG). 3 cysteine pairs are disulfide-bonded: cysteine 28–cysteine 41, cysteine 35–cysteine 54, and cysteine 48–cysteine 63. N-linked (GlcNAc...) asparagine glycosylation occurs at asparagine 37. Asparagine 121 is a glycosylation site (N-linked (GlcNAc...) asparagine). LRR repeat units follow at residues 121-142 (NVTL…VFSR), 145-166 (ELRK…AFLG), 169-190 (NLQI…IFKD), 193-214 (QLAW…SFMG), 217-238 (SLFF…LCAQ), 241-262 (QLNW…TFLT), 265-286 (SLTV…TFSS), 289-310 (NLGE…LFSD), 313-334 (LLQK…QFGS), and 337-358 (QLQS…MFQP). Residue asparagine 257 is glycosylated (N-linked (GlcNAc...) asparagine). Residues asparagine 318, asparagine 350, and asparagine 361 are each glycosylated (N-linked (GlcNAc...) asparagine). Residues 400 to 420 (ILRVSVWVIAFITCVGNFLVI) traverse the membrane as a helical segment. At 421–438 (AVRSLIKAENTTHAMSIK) the chain is on the cytoplasmic side. Residues 439–459 (ILCCADCLMGVYLFSVGVFDI) traverse the membrane as a helical segment. Topologically, residues 460-478 (KYRGQYQKYALLWMESVPC) are extracellular. An intrachain disulfide couples cysteine 478 to cysteine 556. The chain crosses the membrane as a helical span at residues 479-501 (RLLGFLATLSTEVSVLLLTFLTL). The Cytoplasmic segment spans residues 502-520 (EKFLVIVFPFSNLRLGKRQ). Residues 521-541 (TAVALASIWVVGFLIAAVPFT) form a helical membrane-spanning segment. The Extracellular segment spans residues 542–575 (REDYFGNFYGKNGVCFPLHYDQAEDFGSRGYSLG). Residues 576 to 596 (IFLGVNLLAFLVIVISYVTMF) form a helical membrane-spanning segment. Residues 597–622 (CSIHKTALQTAEVRSHIGKEVAVANR) lie on the Cytoplasmic side of the membrane. The helical transmembrane segment at 623–643 (FFFIVFSDAICWIPVFVVKIL) threads the bilayer. Residues 644–653 (SLLQVEIPGT) lie on the Extracellular side of the membrane. The chain crosses the membrane as a helical span at residues 654–674 (ITSWIVVFFLPVNSALNPILY). Topologically, residues 675-737 (TLTTSFFKDK…GDSIMKPVSP (63 aa)) are cytoplasmic.

This sequence belongs to the G-protein coupled receptor 1 family. Expressed in embryonic and adult gonads of males and females, as well in male gubernarculum. Expressed also in brain. Not detected in kidney, spleen and heart.

It is found in the cell membrane. Receptor for relaxin. The activity of this receptor is mediated by G proteins leading to stimulation of adenylate cyclase and an increase of cAMP. May also be a receptor for Leydig insulin-like peptide (INSL3). The sequence is that of Relaxin receptor 2 (Rxfp2) from Mus musculus (Mouse).